A 473-amino-acid polypeptide reads, in one-letter code: 3-isopropylmalate dehydratase large subunit (473 aa).

Residues Cys-354, Cys-414, and Cys-417 each contribute to the [4Fe-4S] cluster site.

The protein belongs to the aconitase/IPM isomerase family. LeuC type 1 subfamily. Heterodimer of LeuC and LeuD. [4Fe-4S] cluster is required as a cofactor.

The enzyme catalyses (2R,3S)-3-isopropylmalate = (2S)-2-isopropylmalate. Its pathway is amino-acid biosynthesis; L-leucine biosynthesis; L-leucine from 3-methyl-2-oxobutanoate: step 2/4. Functionally, catalyzes the isomerization between 2-isopropylmalate and 3-isopropylmalate, via the formation of 2-isopropylmaleate. This is 3-isopropylmalate dehydratase large subunit from Mycobacterium ulcerans (strain Agy99).